A 190-amino-acid chain; its full sequence is Probable chorismate pyruvate-lyase (190 aa).

R74, L112, and E173 together coordinate substrate.

Belongs to the UbiC family.

Its subcellular location is the cytoplasm. It catalyses the reaction chorismate = 4-hydroxybenzoate + pyruvate. It functions in the pathway cofactor biosynthesis; ubiquinone biosynthesis. Removes the pyruvyl group from chorismate, with concomitant aromatization of the ring, to provide 4-hydroxybenzoate (4HB) for the ubiquinone pathway. The chain is Probable chorismate pyruvate-lyase from Bordetella bronchiseptica (strain ATCC BAA-588 / NCTC 13252 / RB50) (Alcaligenes bronchisepticus).